A 101-amino-acid chain; its full sequence is AFA-III adhesin operon regulatory protein (101 aa).

Regulates the transcription of genes involved in the biosynthesis of afimbrial adhesin-III. The sequence is that of AFA-III adhesin operon regulatory protein (afaA) from Escherichia coli.